Here is a 367-residue protein sequence, read N- to C-terminus: tRNA N6-adenosine threonylcarbamoyltransferase (367 aa).

H123 and H127 together coordinate Fe cation. Substrate contacts are provided by residues 145–149 (LVSGG), D178, G191, and N288. D316 serves as a coordination point for Fe cation.

The protein belongs to the KAE1 / TsaD family. Fe(2+) is required as a cofactor.

It is found in the cytoplasm. The catalysed reaction is L-threonylcarbamoyladenylate + adenosine(37) in tRNA = N(6)-L-threonylcarbamoyladenosine(37) in tRNA + AMP + H(+). Functionally, required for the formation of a threonylcarbamoyl group on adenosine at position 37 (t(6)A37) in tRNAs that read codons beginning with adenine. Is involved in the transfer of the threonylcarbamoyl moiety of threonylcarbamoyl-AMP (TC-AMP) to the N6 group of A37, together with TsaE and TsaB. TsaD likely plays a direct catalytic role in this reaction. This is tRNA N6-adenosine threonylcarbamoyltransferase from Caulobacter vibrioides (strain ATCC 19089 / CIP 103742 / CB 15) (Caulobacter crescentus).